Here is a 410-residue protein sequence, read N- to C-terminus: Sprouty-related, EVH1 domain-containing protein 3 (410 aa).

In terms of domain architecture, WH1 spans 1-113 (MVRVRAVVMA…KSLLAALAAL (113 aa)). Residues 117–210 (SLTPSSSSSS…PEPSEPLAGA (94 aa)) form a disordered region. Low complexity-rich tracts occupy residues 120-130 (PSSSSSSSSPS) and 147-165 (DSSS…AAAP). A KBD domain is found at 195 to 244 (LPFTGIPEPSEPLAGAGGLGWGGRGYEDYRRSGPPAPLALSTCVVRFAKT). Residue Arg240 is modified to Asymmetric dimethylarginine. Arg248 is modified (omega-N-methylarginine). The tract at residues 258 to 288 (LPAPLTEAAPPAPPARPPPGPGPSSAPAKAS) is disordered. The span at 267-281 (PPAPPARPPPGPGPS) shows a compositional bias: pro residues. One can recognise an SPR domain in the interval 296 to 407 (RCVHCRALFR…CAGCGGRHEE (112 aa)).

Interacts with palmitoyltransferase ZDHHC17/HIP14; the interaction leads to palmitoylation of SPRED3. Post-translationally, phosphorylated on tyrosine. Palmitoylated by ZDHHC17/HIP14. In terms of processing, ubiquitinated.

Its subcellular location is the cell membrane. Its function is as follows. Tyrosine kinase substrate that inhibits growth-factor-mediated activation of MAP kinase. Inhibits fibroblast growth factor (FGF)-induced retinal lens fiber differentiation, probably by inhibiting FGF-mediated phosphorylation of ERK1/2. Inhibits TGFB-induced epithelial-to-mesenchymal transition in lens epithelial cells. The sequence is that of Sprouty-related, EVH1 domain-containing protein 3 (SPRED3) from Homo sapiens (Human).